A 101-amino-acid polypeptide reads, in one-letter code: Large ribosomal subunit protein uL24 (101 aa).

Belongs to the universal ribosomal protein uL24 family. As to quaternary structure, part of the 50S ribosomal subunit.

Functionally, one of two assembly initiator proteins, it binds directly to the 5'-end of the 23S rRNA, where it nucleates assembly of the 50S subunit. In terms of biological role, one of the proteins that surrounds the polypeptide exit tunnel on the outside of the subunit. The polypeptide is Large ribosomal subunit protein uL24 (Streptococcus pneumoniae (strain ATCC 700669 / Spain 23F-1)).